The primary structure comprises 136 residues: Nucleoside diphosphate kinase (136 aa).

Positions 10, 58, 86, 92, 104, and 114 each coordinate ATP. His-117 acts as the Pros-phosphohistidine intermediate in catalysis.

It belongs to the NDK family. Homohexamer. Mg(2+) serves as cofactor.

The protein localises to the cytoplasm. It carries out the reaction a 2'-deoxyribonucleoside 5'-diphosphate + ATP = a 2'-deoxyribonucleoside 5'-triphosphate + ADP. The catalysed reaction is a ribonucleoside 5'-diphosphate + ATP = a ribonucleoside 5'-triphosphate + ADP. Its function is as follows. Major role in the synthesis of nucleoside triphosphates other than ATP. The ATP gamma phosphate is transferred to the NDP beta phosphate via a ping-pong mechanism, using a phosphorylated active-site intermediate. The polypeptide is Nucleoside diphosphate kinase (Mycobacterium bovis (strain ATCC BAA-935 / AF2122/97)).